The primary structure comprises 379 residues: Citrate synthase (379 aa).

Catalysis depends on residues His225, His265, and Asp316.

It belongs to the citrate synthase family. As to quaternary structure, homodimer.

It carries out the reaction oxaloacetate + acetyl-CoA + H2O = citrate + CoA + H(+). Its pathway is carbohydrate metabolism; tricarboxylic acid cycle; isocitrate from oxaloacetate: step 1/2. In terms of biological role, might regulate the synthesis and function of enzymes involved in later enzymatic steps of Krebs cycle. This Haloferax volcanii (strain ATCC 29605 / DSM 3757 / JCM 8879 / NBRC 14742 / NCIMB 2012 / VKM B-1768 / DS2) (Halobacterium volcanii) protein is Citrate synthase (citZ).